The chain runs to 126 residues: Small ribosomal subunit protein bS6 (126 aa).

Residues 101–126 (VMMKAKEERSAKREDAAPRAEEAAAE) form a disordered region. Basic and acidic residues predominate over residues 104 to 126 (KAKEERSAKREDAAPRAEEAAAE).

This sequence belongs to the bacterial ribosomal protein bS6 family.

Binds together with bS18 to 16S ribosomal RNA. The polypeptide is Small ribosomal subunit protein bS6 (Aliivibrio fischeri (strain ATCC 700601 / ES114) (Vibrio fischeri)).